We begin with the raw amino-acid sequence, 362 residues long: Innexin inx1 (362 aa).

Residues 1–28 lie on the Cytoplasmic side of the membrane; sequence MYKLLGSLKSYLKWQDIQTDNAVFRLHN. Residues 29 to 49 form a helical membrane-spanning segment; it reads SFTTVLLLTCSLIITATQYVG. At 50-110 the chain is on the extracellular side; the sequence is QPISCIVNGV…DAKKYYTYYQ (61 aa). Residues 111–131 traverse the membrane as a helical segment; it reads WVCFVLFFQAMACYTPKFLWN. At 132–177 the chain is on the cytoplasmic side; it reads KFEGGLMRMIVMGLNITICTREEKEAKRDALLDYLIKHVKRHKLYA. The chain crosses the membrane as a helical span at residues 178–198; that stretch reads IRYWACEFLCCINIIVQMYLM. At 199 to 267 the chain is on the extracellular side; that stretch reads NRFFDGEFLS…LPLNIVNEKT (69 aa). Residues 268-288 form a helical membrane-spanning segment; it reads YVFIWFWFWILLVLLIGLIVF. Topologically, residues 289-362 are cytoplasmic; that stretch reads RGCIIFMPKF…VEPSKHDRAK (74 aa).

Belongs to the pannexin family. In terms of assembly, heterooligomer of Inx2 and ogre. In ovary, expressed in follicle cells. Expressed around the periphery of the embryo during cellular blastoderm formation. Repeating epidermal pattern emerges from stage 11, high levels of expression detected along the borders of each segment from stage 13. At stage 13, expressed in the dorsal branch of the tracheal system. During stage 15, detected in a few cells at each of the branch points of the dorsal trunk and at low levels in cardioblasts. In embryos, also expressed in the salivary gland and the hindgut (at protein level). At stage 17, expressed in the dorsal side of the CNS. Expressed in the imaginal wing disk. Expressed in larval CNS and in tissues outside of the CNS. In pupae, expressed in the CNS and in primary, secondary and tertiary pigment cells of the retina.

The protein resides in the cell membrane. Its subcellular location is the cell junction. The protein localises to the gap junction. It is found in the basolateral cell membrane. Functionally, structural component of the gap junctions. Essential for generation and/or maintenance of postembryonic neuroblasts and normal development of optic lobe. The protein is Innexin inx1 (ogre) of Drosophila melanogaster (Fruit fly).